The sequence spans 403 residues: 26S proteasome regulatory subunit 6B homolog (403 aa).

Met1 bears the N-acetylmethionine mark. 191 to 198 (GPPGTGKT) contributes to the ATP binding site.

Belongs to the AAA ATPase family.

It is found in the cytoplasm. Its subcellular location is the nucleus. Functionally, the 26S proteasome is involved in the ATP-dependent degradation of ubiquitinated proteins. The regulatory (or ATPase) complex confers ATP dependency and substrate specificity to the 26S complex. This Dictyostelium discoideum (Social amoeba) protein is 26S proteasome regulatory subunit 6B homolog (psmC4).